Consider the following 181-residue polypeptide: Translation initiation factor IF-3 (181 aa).

It belongs to the IF-3 family. Monomer.

Its subcellular location is the cytoplasm. Its function is as follows. IF-3 binds to the 30S ribosomal subunit and shifts the equilibrium between 70S ribosomes and their 50S and 30S subunits in favor of the free subunits, thus enhancing the availability of 30S subunits on which protein synthesis initiation begins. The protein is Translation initiation factor IF-3 of Mycoplasma mycoides subsp. mycoides SC (strain CCUG 32753 / NCTC 10114 / PG1).